Here is a 586-residue protein sequence, read N- to C-terminus: Protein BONZAI 2 (586 aa).

Glycine 2 is lipidated: N-myristoyl glycine. 2 consecutive C2 domains span residues serine 25–leucine 164 and proline 176–leucine 303. 4 residues coordinate Ca(2+): aspartate 62, aspartate 68, aspartate 121, and aspartate 123. Residues asparagine 344–leucine 563 enclose the VWFA domain.

It belongs to the copine family. Interacts with BAP1 and BAP2. Ca(2+) serves as cofactor. Expressed in roots, leaves and stems. Expressed in young growing tissues.

It localises to the cell membrane. Functionally, negative regulator of cell death and defense responses. May repress a number of R genes and may have effects in promoting growth and development. May function in membrane trafficking and in fusion of vesicles with plasma membrane. The sequence is that of Protein BONZAI 2 (BON2) from Arabidopsis thaliana (Mouse-ear cress).